The sequence spans 1034 residues: Ubiquitin-like-specific protease 2 (1034 aa).

6 disordered regions span residues 1 to 42 (MSAR…FRKD), 71 to 110 (IELS…HSSL), 388 to 419 (SHAV…DDAT), 731 to 800 (IDQS…PIRH), 841 to 960 (GVSS…DSLG), and 983 to 1034 (SSPT…DEDP). Residues 19–33 (SSRASSPRSSASLPP) show a composition bias toward low complexity. Residues 74–85 (SDNDVDNNDEGE) are compositionally biased toward acidic residues. Residues 743 to 756 (TSEPPCSRSSSIST) show a composition bias toward low complexity. Phosphoserine is present on serine 788. 3 stretches are compositionally biased toward polar residues: residues 845–856 (PIKNDQALSSTH), 876–904 (QLSS…VISD), and 912–923 (GVNSESKNTSGI). Serine 903 carries the post-translational modification Phosphoserine. Phosphoserine occurs at positions 983 and 984. Polar residues predominate over residues 992–1017 (TSATSKGSNAQLLSNYGDENNQSQDS).

It belongs to the peptidase C48 family.

Functionally, insertion mutation in SMT4 confers temperature and benomyl sensitivity; high copy suppressor of a temperature sensitive mutation in MIF2. The sequence is that of Ubiquitin-like-specific protease 2 (ULP2) from Saccharomyces cerevisiae (strain ATCC 204508 / S288c) (Baker's yeast).